The chain runs to 396 residues: Tryptophan synthase beta chain (396 aa).

Lysine 88 is modified (N6-(pyridoxal phosphate)lysine).

Belongs to the TrpB family. In terms of assembly, tetramer of two alpha and two beta chains. Pyridoxal 5'-phosphate serves as cofactor.

It carries out the reaction (1S,2R)-1-C-(indol-3-yl)glycerol 3-phosphate + L-serine = D-glyceraldehyde 3-phosphate + L-tryptophan + H2O. It functions in the pathway amino-acid biosynthesis; L-tryptophan biosynthesis; L-tryptophan from chorismate: step 5/5. In terms of biological role, the beta subunit is responsible for the synthesis of L-tryptophan from indole and L-serine. This chain is Tryptophan synthase beta chain, found in Shewanella putrefaciens (strain CN-32 / ATCC BAA-453).